Reading from the N-terminus, the 652-residue chain is Probable endo-1,3(4)-beta-glucanase AFUB_029980 (652 aa).

The first 21 residues, 1–21, serve as a signal peptide directing secretion; that stretch reads MAPSSLLLSVGSLITSSLVSA. The GH16 domain occupies 36 to 289; sequence ESWQGESFIN…WAGNVFAEST (254 aa). The N-linked (GlcNAc...) asparagine glycan is linked to Asn64. Residue Glu145 is the Nucleophile of the active site. Glu150 serves as the catalytic Proton donor. Asn200 and Asn208 each carry an N-linked (GlcNAc...) asparagine glycan. The disordered stretch occupies residues 379–423; sequence NTVATSAADHATPSSAETTTVPAATGAPSVSATEGGDSELESTST. Polar residues predominate over residues 390 to 410; it reads TPSSAETTTVPAATGAPSVSA. N-linked (GlcNAc...) asparagine glycosylation is present at Asn453. A disordered region spans residues 509–551; that stretch reads SEIPTAPPEPVSQAVSTGSFDDSDTAQGDSEEQGSIASASVAP. Positions 529–540 are enriched in acidic residues; the sequence is DDSDTAQGDSEE. The GPI-anchor amidated asparagine moiety is linked to residue Asn630. The propeptide at 631–652 is removed in mature form; that stretch reads GANRMSVGLSGLIGVMFIAALA.

Belongs to the glycosyl hydrolase 16 family.

Its subcellular location is the cell membrane. It catalyses the reaction Endohydrolysis of (1-&gt;3)- or (1-&gt;4)-linkages in beta-D-glucans when the glucose residue whose reducing group is involved in the linkage to be hydrolyzed is itself substituted at C-3.. In terms of biological role, mixed-linked glucanase involved in the degradation of complex natural cellulosic substrates. In Aspergillus fumigatus (strain CBS 144.89 / FGSC A1163 / CEA10) (Neosartorya fumigata), this protein is Probable endo-1,3(4)-beta-glucanase AFUB_029980.